Consider the following 207-residue polypeptide: Urease accessory protein UreG (207 aa).

Gly-12–Thr-19 contacts GTP.

This sequence belongs to the SIMIBI class G3E GTPase family. UreG subfamily. As to quaternary structure, homodimer. UreD, UreF and UreG form a complex that acts as a GTP-hydrolysis-dependent molecular chaperone, activating the urease apoprotein by helping to assemble the nickel containing metallocenter of UreC. The UreE protein probably delivers the nickel.

It localises to the cytoplasm. Facilitates the functional incorporation of the urease nickel metallocenter. This process requires GTP hydrolysis, probably effectuated by UreG. The protein is Urease accessory protein UreG of Cereibacter sphaeroides (strain ATCC 17029 / ATH 2.4.9) (Rhodobacter sphaeroides).